Reading from the N-terminus, the 407-residue chain is Tryptophan synthase beta chain (407 aa).

N6-(pyridoxal phosphate)lysine is present on K91.

Belongs to the TrpB family. Tetramer of two alpha and two beta chains. Pyridoxal 5'-phosphate is required as a cofactor.

It carries out the reaction (1S,2R)-1-C-(indol-3-yl)glycerol 3-phosphate + L-serine = D-glyceraldehyde 3-phosphate + L-tryptophan + H2O. Its pathway is amino-acid biosynthesis; L-tryptophan biosynthesis; L-tryptophan from chorismate: step 5/5. In terms of biological role, the beta subunit is responsible for the synthesis of L-tryptophan from indole and L-serine. In Streptococcus pneumoniae (strain Taiwan19F-14), this protein is Tryptophan synthase beta chain.